A 356-amino-acid polypeptide reads, in one-letter code: Putative transposase y4zB (356 aa).

The segment covering 1–19 has biased composition (low complexity); it reads MITTGTPTTRRSAAGTAGA. Disordered stretches follow at residues 1 to 54 and 334 to 356; these read MITT…PLAD and PPPVNPSHRRPRCSPHQMSFAYV.

It belongs to the transposase 11 family.

This Sinorhizobium fredii (strain NBRC 101917 / NGR234) protein is Putative transposase y4zB.